The chain runs to 132 residues: Small ribosomal subunit protein uS8 (132 aa).

This sequence belongs to the universal ribosomal protein uS8 family. As to quaternary structure, part of the 30S ribosomal subunit. Contacts proteins S5 and S12.

Functionally, one of the primary rRNA binding proteins, it binds directly to 16S rRNA central domain where it helps coordinate assembly of the platform of the 30S subunit. In Geobacillus thermodenitrificans (strain NG80-2), this protein is Small ribosomal subunit protein uS8.